The primary structure comprises 27 residues: C-reactive protein P1 (27 aa).

The segment at 1–27 (IPQDLSGKMLTFPKEEDDDDVKLMTPK) is disordered. The Pentraxin (PTX) domain occupies 6–27 (SGKMLTFPKEEDDDDVKLMTPK).

The protein belongs to the pentraxin family. In terms of assembly, homopentamer. Pentraxin (or pentaxin) have a discoid arrangement of 5 non-covalently bound subunits. Exists as a dimer under reducing conditions. Requires Ca(2+) as cofactor. Glycosylated.

It localises to the secreted. Displays several functions associated with host defense: it promotes agglutination, bacterial capsular swelling, phagocytosis, and complement fixation through its calcium-dependent binding to phosphorylcholine. The chain is C-reactive protein P1 from Gadus morhua (Atlantic cod).